We begin with the raw amino-acid sequence, 441 residues long: MAGUK p55 subfamily member 4 (441 aa).

A PDZ domain is found at 1 to 84 (MRTVCLVKNQ…TIMFKVIPVS (84 aa)). One can recognise an SH3 domain in the interval 91–161 (QTTVYVRAMI…PSNHLLKRKQ (71 aa)). In terms of domain architecture, Guanylate kinase-like spans 232–421 (HRLIVLVGPS…ARAQLLSAIQ (190 aa)). Residues 373–430 (VDMKFKDEDLQEMEELAQKMESQFGQFFDHVIVNDNLQDARAQLLSAIQKAEEELQWV) adopt a coiled-coil conformation.

Belongs to the MAGUK family. As to quaternary structure, interacts with MPDZ. May interact with GRIA2. Forms a complex with CRB1 and PALS1. Interacts with FASLG. Highly expressed in brain and detected in lung, and bone (at protein level). Also expressed in intestine and spleen.

The protein localises to the cytoplasm. In terms of biological role, may play a role in retinal photoreceptors development. This is MAGUK p55 subfamily member 4 (Mpp4) from Rattus norvegicus (Rat).